The following is a 476-amino-acid chain: MNSIARLSDEINKAILATPLDDDEADKEKLANARGRASSATLRHYNRRRSSYSASSLSSLSSKPTEKEVPTRNEKPKHANIMRVVVYWIRVFLKRIYTFFVHSARVFLYHFLNEEKEFTLASFFWGLCRFVFFPVLLSYKRREMLPPQPSVRRPRFYSSYSYPSSHQDPAYSSFKRHRSSNSYSSSSNGNHVRFQPSIAEEEISFNSFSNSLNSEEDVCVSPMKPKEVSLMGKANSNRSGHSHQPQSTQFSPPANDNISKLPSSFTIVNDPLKSPSSSRLRIRNITLCADKIPRPLLNSKLPRKTLVLDLDETLIHSVSRGSRTTSGQPIEVHVPGEHPILYYIHKRPHLDYFLSNVSQWFRLILFTASVQPYADPIIDYLERDKKIFAKRYYRQHCALVDSSFVKDISICNIHLSRIMIIDNSPASYNAHKENAIPIEGWISDPSDVDLLNLLSFLHALQYVHDVRDLLGLRLAK.

The interval 47–74 (RRRSSYSASSLSSLSSKPTEKEVPTRNE) is disordered. Positions 51-62 (SYSASSLSSLSS) are enriched in low complexity. Residues 64–74 (PTEKEVPTRNE) are compositionally biased toward basic and acidic residues. A helical membrane pass occupies residues 123–139 (FFWGLCRFVFFPVLLSY). Disordered stretches follow at residues 164 to 190 (SSHQDPAYSSFKRHRSSNSYSSSSNGN) and 232 to 256 (GKANSNRSGHSHQPQSTQFSPPAND). The span at 234-256 (ANSNRSGHSHQPQSTQFSPPAND) shows a compositional bias: polar residues. Residues Asn-237, Asn-257, Asn-284, and Asn-356 are each glycosylated (N-linked (GlcNAc...) asparagine). The FCP1 homology domain occupies 299–460 (SKLPRKTLVL…LNLLSFLHAL (162 aa)).

Belongs to the Dullard family. Component of the nem1-spo7 complex.

It localises to the endoplasmic reticulum membrane. It is found in the nucleus membrane. It catalyses the reaction O-phospho-L-seryl-[protein] + H2O = L-seryl-[protein] + phosphate. The enzyme catalyses O-phospho-L-threonyl-[protein] + H2O = L-threonyl-[protein] + phosphate. In terms of biological role, catalytic component of the nem1-spo7 complex which acts as a phosphatase and may be required for proper nuclear membrane morphology. The polypeptide is Nuclear envelope morphology protein 1 (nem1) (Schizosaccharomyces pombe (strain 972 / ATCC 24843) (Fission yeast)).